The chain runs to 276 residues: Radial spoke head protein 9 homolog (276 aa).

This sequence belongs to the flagellar radial spoke RSP9 family. Component of the axonemal radial spoke 1 (RS1) and 2 (RS2) complexes, at least composed of spoke head proteins RSPH1, RSPH3, RSPH9 and the cilia-specific component RSPH4A or sperm-specific component RSPH6A, spoke stalk proteins RSPH14, DNAJB13, DYDC1, ROPN1L and NME5, and the RS1 complex-specific anchor protein IQUB. Interacts with IQUB. Interacts with RSPH3B. Interacts with RSPH4A. Interacts with RSPH6A. Interacts with CFAP61. Interacts with LRRC23.

The protein resides in the cytoplasm. It localises to the cytoskeleton. It is found in the cilium axoneme. Its subcellular location is the flagellum axoneme. The protein localises to the cell projection. The protein resides in the kinocilium. Its function is as follows. Functions as part of axonemal radial spoke complexes that play an important part in the motility of sperm and cilia. Essential for both the radial spoke head assembly and the central pair microtubule stability in ependymal motile cilia. Required for motility of olfactory and neural cilia and for the structural integrity of ciliary axonemes in both 9+0 and 9+2 motile cilia. The chain is Radial spoke head protein 9 homolog (RSPH9) from Bos taurus (Bovine).